A 110-amino-acid chain; its full sequence is U1-lycotoxin-Ls1bb (110 aa).

An N-terminal signal peptide occupies residues 1-20 (MKFVLLFGVLLVTLFSYSSA). A propeptide spanning residues 21-44 (EMLDDFDQADEDELLSLIEKEEAR) is cleaved from the precursor. 4 disulfide bridges follow: cysteine 47-cysteine 62, cysteine 54-cysteine 71, cysteine 61-cysteine 89, and cysteine 73-cysteine 87.

It belongs to the neurotoxin 19 (CSTX) family. 03 subfamily. As to expression, expressed by the venom gland.

It localises to the secreted. This is U1-lycotoxin-Ls1bb from Lycosa singoriensis (Wolf spider).